The following is a 1173-amino-acid chain: Tectonin beta-propeller repeat-containing protein 1 (1173 aa).

TECPR repeat units follow at residues 210 to 239 (SVWAVSLQGRVWYRENVCHHNPEGSTWSLI), 254 to 285 (DLLWATLWEGQAIVREGIDRNNPQGISWSTVE), 301 to 332 (DVVWCITKDRKVWFRRGVNSHNPCGTSWIEMV), and 344 to 376 (NQVWGIGCDDRTIYFRQGVTPSELSGKMWKAIV). Over residues 413–430 (GDADTSSDTELSSIPTNL) the composition is skewed to polar residues. Positions 413 to 495 (GDADTSSDTE…STNPTPSTEL (83 aa)) are disordered. Over residues 431–456 (SSTPPMGAAASSASSTGSQAAGAPAS) the composition is skewed to low complexity. The segment covering 475–485 (SDEKAHLESRK) has biased composition (basic and acidic residues). The segment covering 486-495 (STNPTPSTEL) has biased composition (polar residues). Residues 618–727 (VWVKTGMLQW…WLSLLTMSCC (110 aa)) form the PH domain. TECPR repeat units follow at residues 739–766 (HAIWSVSCKGDIFVSEPSPELEAEPHPM), 962–991 (ALWAISDKGDVLCRLGVTQQNPAGTSWLHV), 1007–1037 (QVWAVARDGSAFYRGSVSPKKPAGDCWYHIP), 1053–1083 (SVFVLDKNGNLWYRQGITPSYPQGSAWDHVS), and 1095–1135 (DQVW…DYGI). The interval 1147–1173 (NASQAPRGTVPSESPPEPMESEGRVMC) is disordered.

It belongs to the TECPR1 family.

It is found in the cytoplasmic vesicle. Its subcellular location is the autophagosome membrane. It localises to the lysosome membrane. In terms of biological role, tethering factor involved in autophagy. Involved in autophagosome maturation by promoting the autophagosome fusion with lysosomes. Binds phosphatidylinositol-3-phosphate (PtdIns(3)P) present at the surface of autophagosomes. The protein is Tectonin beta-propeller repeat-containing protein 1 (TECPR1) of Gallus gallus (Chicken).